Consider the following 874-residue polypeptide: Isopimaradiene synthase, chloroplastic (874 aa).

Residues methionine 1 to isoleucine 12 are compositionally biased toward polar residues. A disordered region spans residues methionine 1–threonine 20. Residues methionine 1–serine 37 constitute a chloroplast transit peptide. Residues aspartate 407, aspartate 409, aspartate 626, aspartate 630, asparagine 770, and glutamate 778 each coordinate Mg(2+). Residues aspartate 407 to aspartate 410 carry the DXDD motif motif. Residues aspartate 626–aspartate 630 carry the DDXXD motif motif.

It belongs to the terpene synthase family. Tpsd subfamily. The cofactor is Mg(2+). Mn(2+) serves as cofactor.

It localises to the plastid. Its subcellular location is the chloroplast. It catalyses the reaction (+)-copalyl diphosphate = isopimara-8(14),15-diene + diphosphate. It participates in terpene metabolism; oleoresin biosynthesis. Terpene synthase (TPS) involved in the biosynthesis of diterpene natural products included in conifer oleoresin secretions and volatile emissions; these compounds contribute to biotic and abiotic stress defense against herbivores and pathogens. Catalyzes the conversion of (+)-copalyl diphosphate ((+)-CPP) to isopimaradiene. The polypeptide is Isopimaradiene synthase, chloroplastic (Picea sitchensis (Sitka spruce)).